We begin with the raw amino-acid sequence, 32 residues long: Protamine S4 (32 aa).

Residues 1 to 32 form a disordered region; sequence GCKKRKARKRPKCKKARKRPKCKRRKVAKKKC.

Testis.

It localises to the nucleus. Its subcellular location is the chromosome. Protamines substitute for histones in the chromatin of sperm during the haploid phase of spermatogenesis. They compact sperm DNA into a highly condensed, stable and inactive complex. The sequence is that of Protamine S4 from Scyliorhinus canicula (Small-spotted catshark).